The primary structure comprises 217 residues: 3,4-dihydroxy-2-butanone 4-phosphate synthase (217 aa).

D-ribulose 5-phosphate contacts are provided by residues 37–38 (RE), Asp-42, 150–154 (RRGHT), and Glu-174. Glu-38 serves as a coordination point for Mg(2+). His-153 contributes to the Mg(2+) binding site.

It belongs to the DHBP synthase family. In terms of assembly, homodimer. Mg(2+) is required as a cofactor. It depends on Mn(2+) as a cofactor.

The enzyme catalyses D-ribulose 5-phosphate = (2S)-2-hydroxy-3-oxobutyl phosphate + formate + H(+). It functions in the pathway cofactor biosynthesis; riboflavin biosynthesis; 2-hydroxy-3-oxobutyl phosphate from D-ribulose 5-phosphate: step 1/1. Its function is as follows. Catalyzes the conversion of D-ribulose 5-phosphate to formate and 3,4-dihydroxy-2-butanone 4-phosphate. This Shewanella baltica (strain OS155 / ATCC BAA-1091) protein is 3,4-dihydroxy-2-butanone 4-phosphate synthase.